The primary structure comprises 34 residues: Photosystem II reaction center protein M (34 aa).

A helical membrane pass occupies residues 6–26; it reads LGAIATALFVFIPCVFLILLY.

Belongs to the PsbM family. PSII is composed of 1 copy each of membrane proteins PsbA, PsbB, PsbC, PsbD, PsbE, PsbF, PsbH, PsbI, PsbJ, PsbK, PsbL, PsbM, PsbT, PsbX, PsbY, PsbZ, Psb30/Ycf12, peripheral proteins PsbO, CyanoQ (PsbQ), PsbU, PsbV and a large number of cofactors. It forms dimeric complexes.

The protein resides in the cellular thylakoid membrane. In terms of biological role, one of the components of the core complex of photosystem II (PSII). PSII is a light-driven water:plastoquinone oxidoreductase that uses light energy to abstract electrons from H(2)O, generating O(2) and a proton gradient subsequently used for ATP formation. It consists of a core antenna complex that captures photons, and an electron transfer chain that converts photonic excitation into a charge separation. This subunit is found at the monomer-monomer interface. This chain is Photosystem II reaction center protein M, found in Acaryochloris marina (strain MBIC 11017).